The following is a 210-amino-acid chain: Large ribosomal subunit protein uL3 (210 aa).

Positions 131-140 (NRASHGNSLS) are enriched in polar residues. Positions 131-150 (NRASHGNSLSHRAPGSIGCR) are disordered. The residue at position 151 (glutamine 151) is an N5-methylglutamine.

This sequence belongs to the universal ribosomal protein uL3 family. In terms of assembly, part of the 50S ribosomal subunit. Forms a cluster with proteins L14 and L19. Methylated by PrmB.

Its function is as follows. One of the primary rRNA binding proteins, it binds directly near the 3'-end of the 23S rRNA, where it nucleates assembly of the 50S subunit. This is Large ribosomal subunit protein uL3 from Acidithiobacillus ferrooxidans (strain ATCC 23270 / DSM 14882 / CIP 104768 / NCIMB 8455) (Ferrobacillus ferrooxidans (strain ATCC 23270)).